Here is a 310-residue protein sequence, read N- to C-terminus: Ribosomal RNA small subunit methyltransferase H (310 aa).

Residues 33-35, Asp-52, Phe-79, Asp-98, and Gln-105 each bind S-adenosyl-L-methionine; that span reads GGH.

This sequence belongs to the methyltransferase superfamily. RsmH family.

Its subcellular location is the cytoplasm. It carries out the reaction cytidine(1402) in 16S rRNA + S-adenosyl-L-methionine = N(4)-methylcytidine(1402) in 16S rRNA + S-adenosyl-L-homocysteine + H(+). In terms of biological role, specifically methylates the N4 position of cytidine in position 1402 (C1402) of 16S rRNA. The protein is Ribosomal RNA small subunit methyltransferase H of Campylobacter jejuni subsp. jejuni serotype O:23/36 (strain 81-176).